Consider the following 101-residue polypeptide: Ubiquitin-related modifier 1 (101 aa).

At Gly101 the chain carries 1-thioglycine. Residue Gly101 forms a Glycyl lysine isopeptide (Gly-Lys) (interchain with K-? in acceptor proteins) linkage.

This sequence belongs to the URM1 family. C-terminal thiocarboxylation occurs in 2 steps, it is first acyl-adenylated (-COAMP) via the hesA/moeB/thiF part of UBA4, then thiocarboxylated (-COSH) via the rhodanese domain of UBA4.

The protein localises to the cytoplasm. It participates in tRNA modification; 5-methoxycarbonylmethyl-2-thiouridine-tRNA biosynthesis. Acts as a sulfur carrier required for 2-thiolation of mcm(5)S(2)U at tRNA wobble positions of cytosolic tRNA(Lys), tRNA(Glu) and tRNA(Gln). Serves as sulfur donor in tRNA 2-thiolation reaction by being thiocarboxylated (-COSH) at its C-terminus by the MOCS3 homolog UBA4. The sulfur is then transferred to tRNA to form 2-thiolation of mcm(5)S(2)U. Prior mcm(5) tRNA modification by the elongator complex is required for 2-thiolation. Also acts as a ubiquitin-like protein (UBL) that is covalently conjugated via an isopeptide bond to lysine residues of target proteins such as AHP1. The thiocarboxylated form serves as substrate for conjugation and oxidative stress specifically induces the formation of UBL-protein conjugates. This Scheffersomyces stipitis (strain ATCC 58785 / CBS 6054 / NBRC 10063 / NRRL Y-11545) (Yeast) protein is Ubiquitin-related modifier 1.